Reading from the N-terminus, the 218-residue chain is Major NAD(P)H-flavin oxidoreductase (218 aa).

FMN-binding positions include 12-16 (RYTSK) and N73. An NAD(+)-binding site is contributed by 154–159 (LARLNI). FMN-binding positions include 165–166 (EG) and 206–208 (KSR).

The protein belongs to the nitroreductase family. As to quaternary structure, homodimer. The cofactor is FMN.

In terms of biological role, involved in bioluminescence. It is a good supplier of reduced flavin mononucleotide (FMNH2) to the bioluminescence reaction. Major FMN reductase. It is capable of using both NADH and NADPH as electron donors. As electron acceptor, FMN is the most effective, FAD is considerably effective, and riboflavin is the least effective. The protein is Major NAD(P)H-flavin oxidoreductase of Aliivibrio fischeri (Vibrio fischeri).